The sequence spans 537 residues: Periplasmic murein peptide-binding protein MppA (537 aa).

A signal peptide spans 1–22; sequence MKHSVSVTCCALLVSSISLSYA. The L-alanyl-gamma-D-glutamyl-meso-2,6-diaminopimelate site is built by lysine 42, valine 54, leucine 56, glutamine 289, arginine 424, serine 435, valine 437, aspartate 439, and threonine 506.

This sequence belongs to the bacterial solute-binding protein 5 family. As to quaternary structure, the complex is composed of two ATP-binding proteins (OppD and OppF), two transmembrane proteins (OppB and OppC) and a solute-binding protein (MppA).

It is found in the periplasm. Part of the ABC transporter complex MppA-OppBCDF involved in the uptake of the cell wall murein tripeptide L-alanyl-gamma-D-glutamyl-meso-diaminopimelate. Is involved in the recycling of cell wall peptides. Binds the cell wall peptide L-Ala-D-Gly-gamma-meso-diaminopimelic acid. Can also transport ordinary alpha-linked tripeptides such as Pro-Phe-Lys, but with much lower efficiency than OppA. Cannot bind typical tripeptides such as Lys-Glu-Lys, Lys-Lys-Lys or Ala-Ala-Ala. The chain is Periplasmic murein peptide-binding protein MppA from Escherichia coli (strain K12).